We begin with the raw amino-acid sequence, 664 residues long: Ubiquinol oxidase subunit 1 (664 aa).

The next 2 membrane-spanning stretches (helical) occupy residues 15-35 and 57-77; these read PILV…LGLI and LAAM…ADAI. Histidine 106 provides a ligand contact to heme b. A run of 12 helical transmembrane segments spans residues 109–129, 136–156, 190–210, 233–253, 278–298, 316–336, 347–367, 383–403, 414–434, 456–476, 490–510, and 603–623; these read IMIF…IVPL, VAFP…FILV, YIWA…NFFV, LCAS…VGLL, LIWA…FGVF, MVYA…HHFF, FFGI…FNWL, WAVG…MLAI, LFLI…GYIC, AFWF…IVGF, AWHP…LGIA, and ALIF…VGLV. Residues histidine 284, tyrosine 288, histidine 333, and histidine 334 each coordinate Cu cation. Positions 284–288 form a cross-link, 1'-histidyl-3'-tyrosine (His-Tyr); it reads HPEVY. Position 419 (histidine 419) interacts with Fe(II)-heme a. Position 421 (histidine 421) interacts with heme b.

The protein belongs to the heme-copper respiratory oxidase family. Heterotetramer of the subunits 1, 2, 3 and 4.

It is found in the cell membrane. Its function is as follows. Catalytic subunit of the enzyme. Electrons originating in a quinol are transferred to the bimetallic center formed by heme a and copper B. This chain is Ubiquinol oxidase subunit 1 (cyaA), found in Acetobacter aceti.